Consider the following 215-residue polypeptide: Adenylate kinase (215 aa).

10-15 lines the ATP pocket; sequence GAGKGT. An NMP region spans residues 30–59; that stretch reads STGDMLRAAIKAGTPLGLEAKKIIDEGGLV. Residues Thr31, Arg36, 57 to 59, 85 to 88, and Gln92 contribute to the AMP site; these read GLV and GFPR. The interval 122-159 is LID; it reads GRRVHLASGRTYHVTYNPPKTEGKDDVTGEDLIQRDDD. Residues Arg123 and 132 to 133 contribute to the ATP site; that span reads TY. Residues Arg156 and Arg167 each coordinate AMP. Gln200 serves as a coordination point for ATP.

It belongs to the adenylate kinase family. As to quaternary structure, monomer.

The protein resides in the cytoplasm. The catalysed reaction is AMP + ATP = 2 ADP. Its pathway is purine metabolism; AMP biosynthesis via salvage pathway; AMP from ADP: step 1/1. Catalyzes the reversible transfer of the terminal phosphate group between ATP and AMP. Plays an important role in cellular energy homeostasis and in adenine nucleotide metabolism. The sequence is that of Adenylate kinase from Neisseria gonorrhoeae (strain ATCC 700825 / FA 1090).